A 522-amino-acid chain; its full sequence is Glutamate--cysteine ligase (522 aa).

It belongs to the glutamate--cysteine ligase type 1 family. Type 1 subfamily.

The catalysed reaction is L-cysteine + L-glutamate + ATP = gamma-L-glutamyl-L-cysteine + ADP + phosphate + H(+). Its pathway is sulfur metabolism; glutathione biosynthesis; glutathione from L-cysteine and L-glutamate: step 1/2. In Shewanella halifaxensis (strain HAW-EB4), this protein is Glutamate--cysteine ligase.